A 364-amino-acid polypeptide reads, in one-letter code: Ferrochelatase (364 aa).

The Fe cation site is built by H210 and E291.

The protein belongs to the ferrochelatase family.

The protein localises to the cytoplasm. The catalysed reaction is heme b + 2 H(+) = protoporphyrin IX + Fe(2+). Its pathway is porphyrin-containing compound metabolism; protoheme biosynthesis; protoheme from protoporphyrin-IX: step 1/1. In terms of biological role, catalyzes the ferrous insertion into protoporphyrin IX. In Idiomarina loihiensis (strain ATCC BAA-735 / DSM 15497 / L2-TR), this protein is Ferrochelatase.